The primary structure comprises 199 residues: Protein GrpE (199 aa).

Residues 20-52 (YKVENEILEEETDEESQHQEPALGHPSYTALEE) form a disordered region.

Belongs to the GrpE family. In terms of assembly, homodimer.

The protein resides in the cytoplasm. In terms of biological role, participates actively in the response to hyperosmotic and heat shock by preventing the aggregation of stress-denatured proteins, in association with DnaK and GrpE. It is the nucleotide exchange factor for DnaK and may function as a thermosensor. Unfolded proteins bind initially to DnaJ; upon interaction with the DnaJ-bound protein, DnaK hydrolyzes its bound ATP, resulting in the formation of a stable complex. GrpE releases ADP from DnaK; ATP binding to DnaK triggers the release of the substrate protein, thus completing the reaction cycle. Several rounds of ATP-dependent interactions between DnaJ, DnaK and GrpE are required for fully efficient folding. The protein is Protein GrpE of Legionella pneumophila (strain Corby).